A 382-amino-acid chain; its full sequence is MGSGEPNPAGKKKKYLKAALYVGDLDPDVTEDMLYKKFRPAGPLRFTRICRDPVTRSPLGYGYVNFRFPADAEWALNTMNFDLINGKPFRLMWSQPDDRLRKSGVGNIFIKNLDKSIDNRALFYLFSAFGNILSCKVVCDDNGSKGYAYVHFDSLAAANRAIWHMNGVRLNNRQVYVGRFKFPEERAAEVRTRDRATFTNVFVKNIGDDIDDEKLKELFCEYGPTESVKVIRDASGKSKGFGFVRYETHEAAQKAVLDLHGKSIDGKVLYVGRAQKKIERLAELRRRFERLRLKEKSRPPGVPIYIKNLDETINDEKLKEEFSSFGSISRAKVMMEVGQGKGFGVVCFSSFEEATKAVDEMNGRVVGSKPLHVTLGQARRRC.

4 consecutive RRM domains span residues 18–96 (AALY…WSQP), 106–182 (GNIF…RFKF), 199–276 (TNVF…RAQK), and 302–378 (VPIY…LGQA).

It is found in the cytoplasm. Binds the poly(A) tail of mRNA. May be involved in cytoplasmic regulatory processes of mRNA metabolism. Can probably bind to cytoplasmic RNA sequences other than poly(A) in vivo. The polypeptide is Polyadenylate-binding protein 5 (PABPC5) (Macaca mulatta (Rhesus macaque)).